Here is a 199-residue protein sequence, read N- to C-terminus: FMN-dependent NADH:quinone oxidoreductase (199 aa).

Residues Ser-9 and 95-98 each bind FMN; that span reads MYNF.

It belongs to the azoreductase type 1 family. As to quaternary structure, homodimer. FMN is required as a cofactor.

It carries out the reaction 2 a quinone + NADH + H(+) = 2 a 1,4-benzosemiquinone + NAD(+). The enzyme catalyses N,N-dimethyl-1,4-phenylenediamine + anthranilate + 2 NAD(+) = 2-(4-dimethylaminophenyl)diazenylbenzoate + 2 NADH + 2 H(+). Quinone reductase that provides resistance to thiol-specific stress caused by electrophilic quinones. Functionally, also exhibits azoreductase activity. Catalyzes the reductive cleavage of the azo bond in aromatic azo compounds to the corresponding amines. This Dechloromonas aromatica (strain RCB) protein is FMN-dependent NADH:quinone oxidoreductase.